The chain runs to 173 residues: NADH-ubiquinone oxidoreductase chain 6 (173 aa).

The next 5 helical transmembrane spans lie at 1–21, 27–47, 48–68, 88–108, and 139–159; these read MTYLVLLLGLCFVLGGLAVAS, YGVVGLVLASVAGCGWLLSLG, VSFVSLVLFMVYLGGMLVVFV, VGYGASFILVVIAGMIVGGLI, and YGVGMFLVAGWGLLLTLFVVL.

This sequence belongs to the complex I subunit 6 family.

It is found in the mitochondrion membrane. The catalysed reaction is a ubiquinone + NADH + 5 H(+)(in) = a ubiquinol + NAD(+) + 4 H(+)(out). In terms of biological role, core subunit of the mitochondrial membrane respiratory chain NADH dehydrogenase (Complex I) that is believed to belong to the minimal assembly required for catalysis. Complex I functions in the transfer of electrons from NADH to the respiratory chain. The immediate electron acceptor for the enzyme is believed to be ubiquinone. The protein is NADH-ubiquinone oxidoreductase chain 6 (MT-ND6) of Calidris maritima (Purple sandpiper).